The chain runs to 410 residues: Zinc finger TRAF-type-containing protein 1 (410 aa).

Over residues 1-13 (MSGAEEAGGGGPA) the composition is skewed to gly residues. Positions 1–22 (MSGAEEAGGGGPAAGPAGSVPA) are disordered. An RING-type; degenerate zinc finger spans residues 117 to 162 (CTVCLDLPKASVYQCTNGHLMCAGCFIHLLADARLKEEQATCPNCR). A TRAF-type zinc finger spans residues 158-231 (CPNCRCEISK…PWHGPFHELT (74 aa)).

Belongs to the ZFTRAF1 family. As to quaternary structure, interacts with LGALS3.

The protein resides in the cytoplasm. It is found in the perinuclear region. The polypeptide is Zinc finger TRAF-type-containing protein 1 (Bos taurus (Bovine)).